Reading from the N-terminus, the 1526-residue chain is Myosin type-2 heavy chain 1 (1526 aa).

The 52-residue stretch at 22 to 73 (DDKRWVWISDPETAFTKAWIKEDLPDKKYVVRYNNSRDEKIVGEDEIDPVNP) folds into the Myosin N-terminal SH3-like domain. The Myosin motor domain maps to 77–755 (DRVNDMAELT…VLAELEERRV (679 aa)). 170-177 (GESGAGKT) lines the ATP pocket. 2 actin-binding regions span residues 634–656 (LNQL…VPNE) and 734–748 (RIGV…GVLA). The 30-residue stretch at 758 to 787 (LQRLMTMLQTRIRGFLQRKIFQKRLKDIQA) folds into the IQ domain. The stretch at 875-1244 (ALDKEEILRR…SLTKQVNELS (370 aa)) forms a coiled coil. Phosphoserine is present on serine 1044.

This sequence belongs to the TRAFAC class myosin-kinesin ATPase superfamily. Myosin family. Binds to cdc4 and rlc1.

In terms of biological role, required for cell division. It is a component of the cdc12 'spot', a structure thought to mark the site of septation. May work in conjunction with myo3. The sequence is that of Myosin type-2 heavy chain 1 (myo2) from Schizosaccharomyces pombe (strain 972 / ATCC 24843) (Fission yeast).